The chain runs to 1483 residues: Dynein axonemal assembly factor 1 homolog (1483 aa).

6 LRR repeats span residues 34–56 (RLND…EEYT), 57–78 (ELKC…EKLS), 79–100 (KLKC…DPCR), 101–122 (ELDT…GTNV), 125–146 (VLNT…SDLI), and 150–171 (TLSV…KIFE). One can recognise an LRRCT domain in the interval 185–223 (PVVSRLPQYRKTLILACKELTYLDSRPVFPRDRACAEAW). Disordered regions lie at residues 249–282 (SINC…TCAE), 300–327 (EEVS…GTSS), 945–986 (DSGD…HGTK), and 1167–1213 (SENE…SIDD). Polar residues predominate over residues 311–327 (DGTNSSSSLEDNDGTSS). Residues 1183-1196 (TNDKESSDIMEKNG) show a composition bias toward basic and acidic residues.

The protein belongs to the DNAAF1 family.

It localises to the cell projection. The protein resides in the cilium. Cilium-specific protein required for cilia structures. The polypeptide is Dynein axonemal assembly factor 1 homolog (dtr) (Drosophila melanogaster (Fruit fly)).